Consider the following 297-residue polypeptide: Formylmethanofuran--tetrahydromethanopterin formyltransferase (297 aa).

This sequence belongs to the FTR family. In terms of assembly, homotetramer.

It localises to the cytoplasm. The catalysed reaction is N-formylmethanofuran + 5,6,7,8-tetrahydromethanopterin + H(+) = N(5)-formyl-5,6,7,8-tetrahydromethanopterin + methanofuran. It participates in metabolic intermediate metabolism; lactate oxidation. Functionally, catalyzes the transfer of a formyl group from 5-formyl tetrahydromethanopterin (5-formyl-H(4)MPT) to methanofuran (MFR) to produce formylmethanofuran (formyl-MFR) and tetrahydromethanopterin (H(4)MPT). The protein is Formylmethanofuran--tetrahydromethanopterin formyltransferase of Archaeoglobus fulgidus (strain ATCC 49558 / DSM 4304 / JCM 9628 / NBRC 100126 / VC-16).